Here is a 427-residue protein sequence, read N- to C-terminus: 3-phosphoshikimate 1-carboxyvinyltransferase (427 aa).

Residues K20, S21, and R25 each contribute to the 3-phosphoshikimate site. Residue K20 participates in phosphoenolpyruvate binding. Residues G92 and R120 each coordinate phosphoenolpyruvate. The 3-phosphoshikimate site is built by S166, Q168, D312, and K339. Q168 is a binding site for phosphoenolpyruvate. D312 functions as the Proton acceptor in the catalytic mechanism. Positions 343 and 385 each coordinate phosphoenolpyruvate.

It belongs to the EPSP synthase family. As to quaternary structure, monomer.

The protein resides in the cytoplasm. It catalyses the reaction 3-phosphoshikimate + phosphoenolpyruvate = 5-O-(1-carboxyvinyl)-3-phosphoshikimate + phosphate. It participates in metabolic intermediate biosynthesis; chorismate biosynthesis; chorismate from D-erythrose 4-phosphate and phosphoenolpyruvate: step 6/7. Catalyzes the transfer of the enolpyruvyl moiety of phosphoenolpyruvate (PEP) to the 5-hydroxyl of shikimate-3-phosphate (S3P) to produce enolpyruvyl shikimate-3-phosphate and inorganic phosphate. The polypeptide is 3-phosphoshikimate 1-carboxyvinyltransferase (Streptococcus mutans serotype c (strain ATCC 700610 / UA159)).